Reading from the N-terminus, the 185-residue chain is Putative manganese efflux pump MntP (185 aa).

Helical transmembrane passes span 4–24, 43–63, 67–87, 107–127, 131–151, and 165–185; these read LLLSSLVIAVGLAMDSFSVSL, IFFGFFQFAMPLLGWGIGVPI, IDPFGYWIVVGLFFFIGGKMI, LLLAVATSIDALAVGISFALI, VLLPAVIIGVVAFLFSFFGVL, and QILGGVILVLIGIKFLIEYCL.

The protein belongs to the MntP (TC 9.B.29) family.

The protein resides in the cell membrane. Functionally, probably functions as a manganese efflux pump. The sequence is that of Putative manganese efflux pump MntP from Methanocorpusculum labreanum (strain ATCC 43576 / DSM 4855 / Z).